A 158-amino-acid chain; its full sequence is Phosphopantetheine adenylyltransferase (158 aa).

T9 provides a ligand contact to substrate. Residues 9 to 10 and H17 contribute to the ATP site; that span reads TF. 3 residues coordinate substrate: K41, L73, and R87. ATP is bound by residues 88-90, E98, and 123-129; these read GLR and YAYISSS.

Belongs to the bacterial CoaD family. Homohexamer. Requires Mg(2+) as cofactor.

It localises to the cytoplasm. The enzyme catalyses (R)-4'-phosphopantetheine + ATP + H(+) = 3'-dephospho-CoA + diphosphate. It participates in cofactor biosynthesis; coenzyme A biosynthesis; CoA from (R)-pantothenate: step 4/5. Reversibly transfers an adenylyl group from ATP to 4'-phosphopantetheine, yielding dephospho-CoA (dPCoA) and pyrophosphate. In Allochromatium vinosum (strain ATCC 17899 / DSM 180 / NBRC 103801 / NCIMB 10441 / D) (Chromatium vinosum), this protein is Phosphopantetheine adenylyltransferase.